Consider the following 120-residue polypeptide: Large ribosomal subunit protein uL18 (120 aa).

This sequence belongs to the universal ribosomal protein uL18 family. As to quaternary structure, part of the 50S ribosomal subunit; part of the 5S rRNA/L5/L18/L25 subcomplex. Contacts the 5S and 23S rRNAs.

This is one of the proteins that bind and probably mediate the attachment of the 5S RNA into the large ribosomal subunit, where it forms part of the central protuberance. The polypeptide is Large ribosomal subunit protein uL18 (Allorhizobium ampelinum (strain ATCC BAA-846 / DSM 112012 / S4) (Agrobacterium vitis (strain S4))).